The primary structure comprises 217 residues: Cytochrome c biogenesis ATP-binding export protein CcmA (217 aa).

An ABC transporter domain is found at 16–214; the sequence is LVLEQLSCER…AHGQAEVTEG (199 aa). ATP is bound at residue 48 to 55; sequence GANGAGKT.

The protein belongs to the ABC transporter superfamily. CcmA exporter (TC 3.A.1.107) family. The complex is composed of two ATP-binding proteins (CcmA) and two transmembrane proteins (CcmB).

Its subcellular location is the cell inner membrane. It carries out the reaction heme b(in) + ATP + H2O = heme b(out) + ADP + phosphate + H(+). Part of the ABC transporter complex CcmAB involved in the biogenesis of c-type cytochromes; once thought to export heme, this seems not to be the case, but its exact role is uncertain. Responsible for energy coupling to the transport system. The protein is Cytochrome c biogenesis ATP-binding export protein CcmA of Alcanivorax borkumensis (strain ATCC 700651 / DSM 11573 / NCIMB 13689 / SK2).